Here is a 169-residue protein sequence, read N- to C-terminus: MPRSQRNDNFIDKTFTIVADILLRIIPTTQREKEAFTYYRDGMSAQSEGEYAEALLNYYEAMRLEIDPYDRSYILYNIGLIHTSNGEHVKALEYYFQALERNPSLPQALNNMAVICHYRGEQAIEQGDSENSEIWFDQAASYWKQAIALAPNNYIEAENWLKITGRLKE.

3 TPR repeats span residues 35–68, 72–105, and 120–153; these read AFTY…EIDP, SYIL…NPSL, and GEQA…APNN.

The protein belongs to the Ycf3 family.

It localises to the plastid. Its subcellular location is the chloroplast thylakoid membrane. In terms of biological role, essential for the assembly of the photosystem I (PSI) complex. May act as a chaperone-like factor to guide the assembly of the PSI subunits. This is Photosystem I assembly protein Ycf3 from Staurastrum punctulatum (Green alga).